Consider the following 420-residue polypeptide: Sodium-dependent phosphate transport protein 4 (420 aa).

Positions 1-21 are disordered; the sequence is MATKTELSPTARESKNAQDMQ. N-linked (GlcNAc...) asparagine glycans are attached at residues Asn-49, Asn-60, Asn-68, and Asn-77. A run of 8 helical transmembrane segments spans residues 126–146, 154–174, 218–238, 256–276, 292–314, 319–341, 357–377, and 385–405; these read SIAL…GGFI, FVFY…FVVI, IWSI…MVVY, LLSA…GYLA, IATI…LNSG, TALL…INVL, GFSS…LSQD, and VFFL…IFGE.

The protein belongs to the major facilitator superfamily. Sodium/anion cotransporter family. In terms of tissue distribution, expressed in the liver and kidney. It is detected in proximal tubules in renal cortex as well as some tubules and glomeruli, with highest expression at the apical side of proximal tubules (at protein level).

It localises to the endoplasmic reticulum membrane. It is found in the cell membrane. It catalyses the reaction urate(in) + Na(+)(out) = urate(out) + Na(+)(in). Transports organic anions in a voltage-driven, multispecific, manner, on the apical side of renal proximal tubule. In particular, participates in the secretion of urate from the cell into the lumen. Urate is the end product of purine metabolism. May have roles in the metabolism and secretion of estrone sulfate, estradiol-17-beta-glucuronide, ochratoxin A, as wells as drugs such as bumetanide. The polypeptide is Sodium-dependent phosphate transport protein 4 (SLC17A3) (Homo sapiens (Human)).